Here is a 496-residue protein sequence, read N- to C-terminus: Angiopoietin-2 (496 aa).

The signal sequence occupies residues 1-18; the sequence is MWQIVFFTLSCDLVLAAA. Residues Asn-89, Asn-119, Asn-133, Asn-151, Asn-240, and Asn-304 are each glycosylated (N-linked (GlcNAc...) asparagine). Positions 166 to 248 form a coiled coil; the sequence is STNKLEKQIL…VNNSVLQKQQ (83 aa). The 221-residue stretch at 275-495 folds into the Fibrinogen C-terminal domain; it reads KEEQISFRDC…ATTMMIRPAD (221 aa). The cysteines at positions 284 and 313 are disulfide-linked. The Ca(2+) site is built by Asp-429, Asp-431, Cys-433, and Cys-435. Disulfide bonds link Cys-433–Cys-435 and Cys-437–Cys-450.

Interacts with TEK/TIE2, competing for the same binding site as ANGPT1. Interacts with ITGA5. Interacts with SVEP1/polydom. Interacts with THBD; this interaction significantly inhibits the generation of activated PC and TAFIa/CPB2 by the thrombin/thrombomodulin complex.

It is found in the secreted. Its function is as follows. Binds to TEK/TIE2, competing for the ANGPT1 binding site, and modulating ANGPT1 signaling. Can induce tyrosine phosphorylation of TEK/TIE2 in the absence of ANGPT1. In the absence of angiogenic inducers, such as VEGF, ANGPT2-mediated loosening of cell-matrix contacts may induce endothelial cell apoptosis with consequent vascular regression. In concert with VEGF, it may facilitate endothelial cell migration and proliferation, thus serving as a permissive angiogenic signal. Involved in the regulation of lymphangiogenesis. This is Angiopoietin-2 (ANGPT2) from Homo sapiens (Human).